The sequence spans 344 residues: HTH-type transcriptional regulator MalR (344 aa).

An HTH lacI-type domain is found at 1-54 (MTTRLADIAAQAGVSEATVSRVLNGKPGVAATTRQSVLAALDVLGYERPVRLRQ). A DNA-binding region (H-T-H motif) is located at residues 5-24 (LADIAAQAGVSEATVSRVLN).

Its function is as follows. Transcriptional repressor of the maltosaccharide utilization operon malEFG. This is HTH-type transcriptional regulator MalR (malR) from Streptomyces coelicolor (strain ATCC BAA-471 / A3(2) / M145).